The following is a 180-amino-acid chain: Outer membrane protein YfaZ (180 aa).

Positions 1 to 21 (MKKIALAGLAGMLLVSASVNA) are cleaved as a signal peptide.

It localises to the cell outer membrane. In Escherichia coli (strain K12), this protein is Outer membrane protein YfaZ (yfaZ).